Here is a 306-residue protein sequence, read N- to C-terminus: Ribosomal protein L11 methyltransferase (306 aa).

Thr154, Gly179, Asp201, and Asn242 together coordinate S-adenosyl-L-methionine.

The protein belongs to the methyltransferase superfamily. PrmA family.

The protein localises to the cytoplasm. It catalyses the reaction L-lysyl-[protein] + 3 S-adenosyl-L-methionine = N(6),N(6),N(6)-trimethyl-L-lysyl-[protein] + 3 S-adenosyl-L-homocysteine + 3 H(+). In terms of biological role, methylates ribosomal protein L11. The chain is Ribosomal protein L11 methyltransferase from Xylella fastidiosa (strain 9a5c).